Consider the following 156-residue polypeptide: Translation initiation factor IF-1, chloroplastic (156 aa).

Positions 1-35 (MAASLTLMTSPPCSRSSKSPSPSPSPSLSCNQQQQ) are disordered. The transit peptide at 1 to 49 (MAASLTLMTSPPCSRSSKSPSPSPSPSLSCNQQQQYKPLLHHQWPPQIS) directs the protein to the chloroplast. Over residues 10-20 (SPPCSRSSKSP) the composition is skewed to low complexity. One can recognise an S1-like domain in the interval 72-148 (GGSPSVQEQK…TRGRITYRLR (77 aa)).

This sequence belongs to the IF-1 family. As to quaternary structure, component of the 30S ribosomal translation pre-initiation complex which assembles on the 30S ribosome in the order IF-2 and IF-3, IF-1 and N-formylmethionyl-tRNA(fMet); mRNA recruitment can occur at any time during PIC assembly.

The protein resides in the plastid. Its subcellular location is the chloroplast. In terms of biological role, one of the essential components for the initiation of protein synthesis. Stabilizes the binding of IF-2 and IF-3 on the 30S subunit to which N-formylmethionyl-tRNA(fMet) subsequently binds. Helps modulate mRNA selection, yielding the 30S pre-initiation complex (PIC). Upon addition of the 50S ribosomal subunit IF-1, IF-2 and IF-3 are released leaving the mature 70S translation initiation complex. This chain is Translation initiation factor IF-1, chloroplastic (infA), found in Mesembryanthemum crystallinum (Common ice plant).